The sequence spans 148 residues: Ribonuclease H (148 aa).

The 142-residue stretch at 3 to 144 (AEETVEIFTD…ADALANRGIE (142 aa)) folds into the RNase H type-1 domain. Residues Asp12, Glu50, Asp72, and Asp136 each coordinate Mg(2+). Residues 129–148 (HPENERADALANRGIEELKG) form a disordered region.

The protein belongs to the RNase H family. In terms of assembly, monomer. The cofactor is Mg(2+).

Its subcellular location is the cytoplasm. The enzyme catalyses Endonucleolytic cleavage to 5'-phosphomonoester.. Endonuclease that specifically degrades the RNA of RNA-DNA hybrids. The sequence is that of Ribonuclease H from Dechloromonas aromatica (strain RCB).